A 245-amino-acid polypeptide reads, in one-letter code: Glutathione S-transferase F4 (245 aa).

Positions 25-106 constitute a GST N-terminal domain; sequence AGYKVHGDPF…YIAYVHSSRG (82 aa). Residues 35-36, 64-65, 77-78, and 90-91 each bind glutathione; these read ST, HK, QV, and ES. Residues 114 to 244 form the GST C-terminal domain; that stretch reads SHETMATLTM…QEKSWFNKPR (131 aa).

It belongs to the GST superfamily. Phi family.

Its subcellular location is the cytoplasm. The protein resides in the cytosol. It catalyses the reaction RX + glutathione = an S-substituted glutathione + a halide anion + H(+). Its function is as follows. May be involved in the conjugation of reduced glutathione to a wide number of exogenous and endogenous hydrophobic electrophiles and have a detoxification role against certain herbicides. The polypeptide is Glutathione S-transferase F4 (GSTF4) (Arabidopsis thaliana (Mouse-ear cress)).